Consider the following 461-residue polypeptide: Cysteine--tRNA ligase (461 aa).

Cys-28 is a Zn(2+) binding site. The 'HIGH' region motif lies at 30 to 40 (ITVYDLCHIGH). Residues Cys-209, His-234, and Glu-238 each coordinate Zn(2+). The 'KMSKS' region signature appears at 266-270 (KMSKS). Lys-269 contributes to the ATP binding site.

Belongs to the class-I aminoacyl-tRNA synthetase family. Monomer. The cofactor is Zn(2+).

The protein localises to the cytoplasm. It catalyses the reaction tRNA(Cys) + L-cysteine + ATP = L-cysteinyl-tRNA(Cys) + AMP + diphosphate. The sequence is that of Cysteine--tRNA ligase from Cronobacter sakazakii (strain ATCC BAA-894) (Enterobacter sakazakii).